Here is a 65-residue protein sequence, read N- to C-terminus: Light-harvesting protein B-800-850 alpha chain C (65 aa).

Residues 1-11 are Cytoplasmic-facing; sequence MNQGRIWTVVS. The helical transmembrane segment at 12 to 35 threads the bilayer; the sequence is PTVGLPLLLGSVAAIAFAVHFAVL. H31 contacts a bacteriochlorophyll. The Periplasmic portion of the chain corresponds to 36-65; that stretch reads ENTSWVAAFMNGKSVAAAPAPAAPAAPAKK.

It belongs to the antenna complex alpha subunit family. The core complex is formed by different alpha and beta chains, binding bacteriochlorophyll molecules, and arranged most probably in tetrameric structures disposed around the reaction center. The non-pigmented gamma chains may constitute additional components.

It localises to the cell inner membrane. Functionally, antenna complexes are light-harvesting systems, which transfer the excitation energy to the reaction centers. This chain is Light-harvesting protein B-800-850 alpha chain C (pucAC), found in Rhodopseudomonas palustris.